The sequence spans 2752 residues: Protein PFF0380w (2752 aa).

Basic and acidic residues predominate over residues 20–30; it reads EREKEEEEKKR. Disordered stretches follow at residues 20-44, 139-160, 634-678, 1048-1130, and 1153-1172; these read EREKEEEEKKRNYNISNNNNNNNYN, HIHKNNDINNIHEKNDKSNNDY, NDIV…INMK, DKKS…SGEN, and ENLQSDENHNNILYPYNNNG. Low complexity predominate over residues 32–44; it reads YNISNNNNNNNYN. The segment covering 142 to 157 has biased composition (basic and acidic residues); the sequence is KNNDINNIHEKNDKSN. Low complexity predominate over residues 640–674; that stretch reads NNNNNNNNNNNNNNNNNNNNNNNNNNNNNNNNNNN. Basic and acidic residues predominate over residues 1048–1060; the sequence is DKKSEDMKEDTPT. Polar residues predominate over residues 1061–1075; the sequence is RGENLQRGQNLQRGD. Over residues 1076-1090 the composition is skewed to basic and acidic residues; that stretch reads NLQRGDNLQRGDNLQ. Polar residues predominate over residues 1091 to 1130; the sequence is RGDNLQNGDNLQNGDNLQRGDNLQNGENLQSGENLQSGEN. The span at 1162–1172 shows a compositional bias: low complexity; it reads NNILYPYNNNG. Residues 1277–1354 form the HTH OST-type domain; the sequence is TLEEVLEIIS…LHRTHIQHKK (78 aa). 4 disordered regions span residues 1457–1499, 1958–1999, 2063–2099, and 2501–2537; these read DIKQ…NNIS, AKNS…YYML, KRKNNNIHNYNDNNNDNNNDNNNDNNNDNNNDNNNDK, and DENNILNNNNDNNNNNNDKSNLVLHNNNDKSNHFLHN. Low complexity-rich tracts occupy residues 1469 to 1499 and 1962 to 1975; these read NNINSNNSNNSNSNSNSNNNNNNNYNSNNIS and NQENINQNEINYNN. Over residues 1976–1994 the composition is skewed to acidic residues; the sequence is NDDDDDNNNNNNDDDDDDN. Low complexity-rich tracts occupy residues 2068–2095 and 2501–2526; these read NIHNYNDNNNDNNNDNNNDNNNDNNNDN and DENNILNNNNDNNNNNNDKSNLVLHN.

This is Protein PFF0380w from Plasmodium falciparum (isolate 3D7).